The chain runs to 159 residues: Phosphopantetheine adenylyltransferase (159 aa).

T10 is a binding site for substrate. ATP-binding positions include 10-11 (TF) and H18. Substrate contacts are provided by K42, M74, and R88. ATP-binding positions include 89–91 (GLR), E99, and 124–130 (WSFISSS).

Belongs to the bacterial CoaD family. In terms of assembly, homohexamer. Requires Mg(2+) as cofactor.

The protein resides in the cytoplasm. It carries out the reaction (R)-4'-phosphopantetheine + ATP + H(+) = 3'-dephospho-CoA + diphosphate. Its pathway is cofactor biosynthesis; coenzyme A biosynthesis; CoA from (R)-pantothenate: step 4/5. Reversibly transfers an adenylyl group from ATP to 4'-phosphopantetheine, yielding dephospho-CoA (dPCoA) and pyrophosphate. This chain is Phosphopantetheine adenylyltransferase, found in Cronobacter sakazakii (strain ATCC BAA-894) (Enterobacter sakazakii).